The primary structure comprises 306 residues: Ribonuclease Z (306 aa).

Zn(2+) contacts are provided by H63, H65, D67, H68, H140, D211, and H269. The Proton acceptor role is filled by D67.

Belongs to the RNase Z family. Homodimer. Zn(2+) is required as a cofactor.

It catalyses the reaction Endonucleolytic cleavage of RNA, removing extra 3' nucleotides from tRNA precursor, generating 3' termini of tRNAs. A 3'-hydroxy group is left at the tRNA terminus and a 5'-phosphoryl group is left at the trailer molecule.. Its function is as follows. Zinc phosphodiesterase, which displays some tRNA 3'-processing endonuclease activity. Probably involved in tRNA maturation, by removing a 3'-trailer from precursor tRNA. In Listeria monocytogenes serotype 4a (strain HCC23), this protein is Ribonuclease Z.